The following is a 145-amino-acid chain: Large-conductance mechanosensitive channel (145 aa).

3 helical membrane passes run 14–34, 38–58, and 81–101; these read VMDL…VKSL, LIMP…YFLP, and GSFL…FLMV.

Belongs to the MscL family. In terms of assembly, homopentamer.

Its subcellular location is the cell inner membrane. Functionally, channel that opens in response to stretch forces in the membrane lipid bilayer. May participate in the regulation of osmotic pressure changes within the cell. The chain is Large-conductance mechanosensitive channel from Rhizobium etli (strain CIAT 652).